An 892-amino-acid chain; its full sequence is Alanine--tRNA ligase (892 aa).

Zn(2+) is bound by residues H596, H600, C700, and H704.

This sequence belongs to the class-II aminoacyl-tRNA synthetase family. Zn(2+) is required as a cofactor.

Its subcellular location is the cytoplasm. It catalyses the reaction tRNA(Ala) + L-alanine + ATP = L-alanyl-tRNA(Ala) + AMP + diphosphate. In terms of biological role, catalyzes the attachment of alanine to tRNA(Ala) in a two-step reaction: alanine is first activated by ATP to form Ala-AMP and then transferred to the acceptor end of tRNA(Ala). Also edits incorrectly charged Ser-tRNA(Ala) and Gly-tRNA(Ala) via its editing domain. The polypeptide is Alanine--tRNA ligase (Methanococcus vannielii (strain ATCC 35089 / DSM 1224 / JCM 13029 / OCM 148 / SB)).